The following is a 1275-amino-acid chain: Serine/threonine-protein kinase ULK4 (1275 aa).

Positions 4 to 280 constitute a Protein kinase domain; the sequence is FILYEEIGRG…WTRLLQHSFW (277 aa). 2 disordered regions span residues 299–350 and 364–392; these read SRNT…KSTL and RPTP…TSPL. Positions 336 to 348 are enriched in basic and acidic residues; the sequence is FRLENPTEFRPKS. Polar residues predominate over residues 364–373; the sequence is RPTPRTSTAV. 5 HEAT repeats span residues 842-880, 926-964, 1025-1063, 1151-1189, and 1213-1253; these read LKLC…ILSH, STVV…LLVN, LVEE…NLVA, NRPL…LYGG, and PKEQ…LAPG.

Belongs to the protein kinase superfamily. Ser/Thr protein kinase family. APG1/unc-51/ULK1 subfamily. Expressed in the brain, mainly in postmitotic neurons, including GABAergic neurons, but not in astrocytes (at protein level).

It catalyses the reaction L-seryl-[protein] + ATP = O-phospho-L-seryl-[protein] + ADP + H(+). It carries out the reaction L-threonyl-[protein] + ATP = O-phospho-L-threonyl-[protein] + ADP + H(+). Functionally, may be involved in the remodeling of cytoskeletal components, such as alpha-tubulin, and in this way regulates neurite branching and elongation, as well as cell motility. The chain is Serine/threonine-protein kinase ULK4 (ULK4) from Homo sapiens (Human).